A 358-amino-acid polypeptide reads, in one-letter code: Uroporphyrinogen decarboxylase (358 aa).

Substrate is bound by residues 36–40 (RQAGR), Asp-85, Tyr-160, Ser-215, and His-338.

It belongs to the uroporphyrinogen decarboxylase family. As to quaternary structure, homodimer.

It localises to the cytoplasm. It carries out the reaction uroporphyrinogen III + 4 H(+) = coproporphyrinogen III + 4 CO2. It participates in porphyrin-containing compound metabolism; protoporphyrin-IX biosynthesis; coproporphyrinogen-III from 5-aminolevulinate: step 4/4. Functionally, catalyzes the decarboxylation of four acetate groups of uroporphyrinogen-III to yield coproporphyrinogen-III. The protein is Uroporphyrinogen decarboxylase of Corynebacterium glutamicum (strain ATCC 13032 / DSM 20300 / JCM 1318 / BCRC 11384 / CCUG 27702 / LMG 3730 / NBRC 12168 / NCIMB 10025 / NRRL B-2784 / 534).